A 347-amino-acid chain; its full sequence is NADH-quinone oxidoreductase subunit H (347 aa).

Transmembrane regions (helical) follow at residues 22 to 42, 59 to 79, 93 to 113, 124 to 144, 171 to 191, 198 to 218, 240 to 260, 285 to 305, and 321 to 341; these read GVVSIKVIALIICLLLATAYL, PSLAGPFGLLQPIADAVKLVF, FIIAPIITFVLSLLGWSVIPI, IGGILFILAVTSLGVYGIIIA, MALSIVAVLIVTGEMDLIQIV, PIWLTIMMLPLAVIYFISILA, VEYSSMAFAMFFLGEYANMIL, IPGYIWFILKVSMVLFCFLWI, and GLKVFLPIVLAWIIVVSAILV.

This sequence belongs to the complex I subunit 1 family. In terms of assembly, NDH-1 is composed of 14 different subunits. Subunits NuoA, H, J, K, L, M, N constitute the membrane sector of the complex.

It is found in the cell inner membrane. It catalyses the reaction a quinone + NADH + 5 H(+)(in) = a quinol + NAD(+) + 4 H(+)(out). In terms of biological role, NDH-1 shuttles electrons from NADH, via FMN and iron-sulfur (Fe-S) centers, to quinones in the respiratory chain. The immediate electron acceptor for the enzyme in this species is believed to be ubiquinone. Couples the redox reaction to proton translocation (for every two electrons transferred, four hydrogen ions are translocated across the cytoplasmic membrane), and thus conserves the redox energy in a proton gradient. This subunit may bind ubiquinone. The polypeptide is NADH-quinone oxidoreductase subunit H (Orientia tsutsugamushi (strain Ikeda) (Rickettsia tsutsugamushi)).